The sequence spans 131 residues: Large ribosomal subunit protein eL32 (131 aa).

Residues 39 to 77 (LGEKWRRPKGRHSKMRRKLKSKPKMPNPGYGSPKKVRGL) are disordered. A compositionally biased stretch (basic residues) spans 44–61 (RRPKGRHSKMRRKLKSKP).

This sequence belongs to the eukaryotic ribosomal protein eL32 family.

This is Large ribosomal subunit protein eL32 (rpl32) from Methanopyrus kandleri (strain AV19 / DSM 6324 / JCM 9639 / NBRC 100938).